The following is a 318-amino-acid chain: Isoflavone reductase (318 aa).

NADP(+) is bound by residues 11–17 (GATGAIG), Arg-36, and Lys-44. Residue Lys-144 is the Proton acceptor of the active site. Arg-148 contacts NADP(+).

This sequence belongs to the NmrA-type oxidoreductase family. Isoflavone reductase subfamily.

The enzyme catalyses (3R)-vestitone + NADP(+) = 2'-hydroxyformononetin + NADPH + 2 H(+). It participates in phytoalexin biosynthesis; pterocarpan phytoalexin biosynthesis. In terms of biological role, reduces achiral isoflavones to chiral isoflavanones during the biosynthesis of chiral pterocarpan phytoalexins. The reduction product (sophrol) is a third isomer, which represents the penultimate intermediate in the synthesis of the phytoalexin (+)-pisatin, the major phytoalexin in pea. The sequence is that of Isoflavone reductase (IFR) from Pisum sativum (Garden pea).